We begin with the raw amino-acid sequence, 784 residues long: MKEGSSISVAVRVRPFTEREKGLLAETPKSKEFLGDGSLAVSNTSSNTFCTNGIRKIVRVLDDNVLIFDPPEENPLAKVQKSLLPAGKRFRDVRYAFDRLFGEEASQEDVYKGTTEPLLDSVLQGYNATVFAYGATGCGKTHTISGRPDDPGIIFLTMRALLDRVEGLKRTMNVDISVSYLEIYNEKIRDLLVQDPLSMEKPKSLNICEDAEQNVSVPGLSYFTPTNLEEVMEIIIRGNSNRTMSPTEANAVSSRSHAVLQIYITQTPKSGEKQEESESQNSHKVRSVFSFIDLAGSERASATKNRGKRLVEGANINRSLLALGNCINSLCEPRRRQHVPYRDSKLTRLLKFSLGGNCRTCMIVCISPSSEHYDETHNTLKYGNRAKNIKTKVSRNVVSVDRHVSEYVRTIYELRQKVSILQKRIAEESKQLALNKEVRKISSREIKMLDARSMLKNSFDGSRDLQKSLIEHVRTLRRIEDEITLTKMWISIAKESDAMSGHNIKSVETRLAKLYDQRSLITAKVNPEEICKTFQNSISHIVSSFKGEGADMYADMLQDDVDLLKSIIENQILDAKHESETFSSTSRKLIQNLFLLFPLLPGNAIDVNESLARAFDQLVGIVPSEPTIQVPNLIEKGKAPLLSMFEIPRSPSRFKARSPSKAARVLKKPLKKRVRFSEVPTTSSVPPVEIKNKDSKPKVEKSLDKHNMNNDRSFLVPSRDARNSLTSLSLHSNVAKNKSSHSSKWPTHTLSPIITTALKQPVRRISLVSQPLQKTGGTENTPNA.

A Kinesin motor domain is found at 6–389 (SISVAVRVRP…LKYGNRAKNI (384 aa)). 134–141 (GATGCGKT) provides a ligand contact to ATP. 2 coiled-coil regions span residues 405–440 (SEYV…EVRK) and 463–483 (RDLQ…EDEI). Residues 677–715 (SEVPTTSSVPPVEIKNKDSKPKVEKSLDKHNMNNDRSFL) are disordered. A compositionally biased stretch (basic and acidic residues) spans 690–709 (IKNKDSKPKVEKSLDKHNMN).

The protein belongs to the TRAFAC class myosin-kinesin ATPase superfamily. Kinesin family. Kinesin II subfamily. Heterodimer with klp5.

The protein localises to the cytoplasm. It is found in the cytoskeleton. It localises to the chromosome. Its subcellular location is the centromere. The protein resides in the kinetochore. The protein localises to the spindle. Has a role in establishing metaphase during mitosis. Required for chromosome segregation where it generates tension during kinetochore capturing. This chain is Kinesin-like protein 6 (klp6), found in Schizosaccharomyces pombe (strain 972 / ATCC 24843) (Fission yeast).